A 304-amino-acid polypeptide reads, in one-letter code: MARTDTDSWDLASSVGATATMVAAARAIASTEPNALIDDPYAADLVRKVGLEFFTKLVDGDIALDGDDAAAAGLMVSMMAVRTRFFDDFFCDAAGAGIRQSVILAAGLDSRAYRLGWPAGTVVYEIDQPRVIEAKTAAMAEIGASPTAERRTVAVDLRDDWPAALRAAGFDAATPTAWIAEGLLVYLPPEAQDRLFDNITALSARGSRLATEYHPDITSTLRGRGQAMSERWRDHGFDVDLSDLWYGGDRNAADEYLAGHGWQVSTRPRPEVFAAYGRTFPDLTLTGDDNAAMRQSVAITATRS.

S-adenosyl-L-methionine-binding positions include Asp127 and 156–157 (DL).

Belongs to the UPF0677 family.

Its function is as follows. Exhibits S-adenosyl-L-methionine-dependent methyltransferase activity. In Mycolicibacterium smegmatis (strain ATCC 700084 / mc(2)155) (Mycobacterium smegmatis), this protein is Putative S-adenosyl-L-methionine-dependent methyltransferase MSMEG_1481/MSMEI_1445.